A 226-amino-acid polypeptide reads, in one-letter code: DNA mismatch repair protein MutH (226 aa).

Belongs to the MutH family.

The protein localises to the cytoplasm. Sequence-specific endonuclease that cleaves unmethylated GATC sequences. It is involved in DNA mismatch repair. The polypeptide is DNA mismatch repair protein MutH (Vibrio parahaemolyticus serotype O3:K6 (strain RIMD 2210633)).